A 343-amino-acid chain; its full sequence is Heat-inducible transcription repressor HrcA (343 aa).

It belongs to the HrcA family.

Negative regulator of class I heat shock genes (grpE-dnaK-dnaJ and groELS operons). Prevents heat-shock induction of these operons. The sequence is that of Heat-inducible transcription repressor HrcA from Mycobacterium marinum (strain ATCC BAA-535 / M).